Reading from the N-terminus, the 92-residue chain is UPF0235 protein PYRAB05010 (92 aa).

Belongs to the UPF0235 family.

The protein is UPF0235 protein PYRAB05010 of Pyrococcus abyssi (strain GE5 / Orsay).